We begin with the raw amino-acid sequence, 190 residues long: Pyridoxamine 5'-phosphate oxidase C1952.08c homolog (190 aa).

Residues Ser62 and Lys69 each contribute to the FMN site.

The protein belongs to the pyridoxamine 5'-phosphate oxidase family. The cofactor is FMN.

The protein localises to the cytoplasm. The protein resides in the nucleus. The sequence is that of Pyridoxamine 5'-phosphate oxidase C1952.08c homolog from Schizosaccharomyces pombe (strain 972 / ATCC 24843) (Fission yeast).